Consider the following 607-residue polypeptide: Elongation factor 4 (607 aa).

Residues 11–193 (ENIRNFSIIA…KIVEVVPAPD (183 aa)) form the tr-type G domain. Residues 23–28 (DHGKST) and 140–143 (NKID) each bind GTP.

It belongs to the TRAFAC class translation factor GTPase superfamily. Classic translation factor GTPase family. LepA subfamily.

It localises to the cell membrane. The enzyme catalyses GTP + H2O = GDP + phosphate + H(+). Functionally, required for accurate and efficient protein synthesis under certain stress conditions. May act as a fidelity factor of the translation reaction, by catalyzing a one-codon backward translocation of tRNAs on improperly translocated ribosomes. Back-translocation proceeds from a post-translocation (POST) complex to a pre-translocation (PRE) complex, thus giving elongation factor G a second chance to translocate the tRNAs correctly. Binds to ribosomes in a GTP-dependent manner. This Staphylococcus aureus (strain MW2) protein is Elongation factor 4.